The sequence spans 567 residues: Oxygen-dependent choline dehydrogenase (567 aa).

4-33 (DYIIIGAGSAGNVLAARLTEDADVTVLLLE) serves as a coordination point for FAD. The active-site Proton acceptor is H473.

Belongs to the GMC oxidoreductase family. FAD is required as a cofactor.

It catalyses the reaction choline + A = betaine aldehyde + AH2. It carries out the reaction betaine aldehyde + NAD(+) + H2O = glycine betaine + NADH + 2 H(+). Its pathway is amine and polyamine biosynthesis; betaine biosynthesis via choline pathway; betaine aldehyde from choline (cytochrome c reductase route): step 1/1. Its function is as follows. Involved in the biosynthesis of the osmoprotectant glycine betaine. Catalyzes the oxidation of choline to betaine aldehyde and betaine aldehyde to glycine betaine at the same rate. In Yersinia pseudotuberculosis serotype IB (strain PB1/+), this protein is Oxygen-dependent choline dehydrogenase.